The sequence spans 621 residues: Amino-acid acetyltransferase, mitochondrial (621 aa).

Residues 1–77 constitute a mitochondrion transit peptide; sequence MIPRAPPSTQ…RSYLASFGVQ (77 aa). The tract at residues 213-233 is disordered; sequence PKPGSEEESEPGFSPPETHIY. The 177-residue stretch at 424–600 folds into the N-acetyltransferase domain; the sequence is LPIRVVRSVS…GSAGLSFIED (177 aa).

Belongs to the acetyltransferase family.

Its subcellular location is the mitochondrion. It catalyses the reaction L-glutamate + acetyl-CoA = N-acetyl-L-glutamate + CoA + H(+). It functions in the pathway amino-acid biosynthesis; L-arginine biosynthesis; N(2)-acetyl-L-ornithine from L-glutamate: step 1/4. Functionally, N-acetylglutamate synthase involved in arginine biosynthesis. The chain is Amino-acid acetyltransferase, mitochondrial (ARG2) from Coprinopsis cinerea (strain Okayama-7 / 130 / ATCC MYA-4618 / FGSC 9003) (Inky cap fungus).